The following is a 169-amino-acid chain: Small ribosomal subunit protein uS5 (169 aa).

The S5 DRBM domain maps to 14–77 (MKEQVVDIRR…QAAKKNLLLV (64 aa)).

It belongs to the universal ribosomal protein uS5 family. As to quaternary structure, part of the 30S ribosomal subunit. Contacts proteins S4 and S8.

With S4 and S12 plays an important role in translational accuracy. Its function is as follows. Located at the back of the 30S subunit body where it stabilizes the conformation of the head with respect to the body. This Alkaliphilus metalliredigens (strain QYMF) protein is Small ribosomal subunit protein uS5.